Here is a 217-residue protein sequence, read N- to C-terminus: Large ribosomal subunit protein uL3 (217 aa).

The interval 129 to 161 (SRGPMSHGSKNHRAPGSTGAGTTPGRIYPGKRM) is disordered. Over residues 142–153 (APGSTGAGTTPG) the composition is skewed to low complexity.

The protein belongs to the universal ribosomal protein uL3 family. In terms of assembly, part of the 50S ribosomal subunit. Forms a cluster with proteins L14 and L19.

In terms of biological role, one of the primary rRNA binding proteins, it binds directly near the 3'-end of the 23S rRNA, where it nucleates assembly of the 50S subunit. This chain is Large ribosomal subunit protein uL3, found in Prochlorococcus marinus subsp. pastoris (strain CCMP1986 / NIES-2087 / MED4).